A 1339-amino-acid chain; its full sequence is Aldehyde oxidase 1 (1339 aa).

Residues 5 to 92 enclose the 2Fe-2S ferredoxin-type domain; the sequence is SELLFYVNGR…GAAVTTVEGI (88 aa). [2Fe-2S] cluster is bound by residues cysteine 44, cysteine 49, cysteine 52, and cysteine 74. Glutamine 113 is a Mo-molybdopterin binding site. 4 residues coordinate [2Fe-2S] cluster: cysteine 114, cysteine 117, cysteine 149, and cysteine 151. Mo-molybdopterin is bound at residue cysteine 151. An FAD-binding PCMH-type domain is found at 236 to 421; that stretch reads FGSDRMTWIS…ISVNIPYSRK (186 aa). Residues 264–271, alanine 345, serine 354, histidine 358, aspartate 367, and leucine 411 each bind FAD; that span reads VVMGNTSV. Mo-molybdopterin contacts are provided by residues 807 to 808 and methionine 1048; that span reads AF. Serine 1069 carries the phosphoserine modification. Mo-molybdopterin is bound by residues 1089-1092, glutamine 1204, and leucine 1269; that span reads GSVV. Glutamate 1271 serves as the catalytic Proton acceptor; for azaheterocycle hydroxylase activity.

Belongs to the xanthine dehydrogenase family. In terms of assembly, homodimer. It depends on [2Fe-2S] cluster as a cofactor. FAD serves as cofactor. Mo-molybdopterin is required as a cofactor. The N-terminus is blocked. Expressed at high levels in liver, lung and spleen. Also expressed in kindey, eye, testis, duodenum, esophagus and thymus (at protein level).

It localises to the cytoplasm. The enzyme catalyses an aldehyde + O2 + H2O = a carboxylate + H2O2 + H(+). It catalyses the reaction retinal + O2 + H2O = retinoate + H2O2 + H(+). Oxidase with broad substrate specificity, oxidizing aromatic azaheterocycles, such as N1-methylnicotinamide, N-methylphthalazinium and phthalazine, as well as aldehydes, such as benzaldehyde, retinal, pyridoxal, and vanillin. Plays a key role in the metabolism of xenobiotics and drugs containing aromatic azaheterocyclic substituents. Is probably involved in the regulation of reactive oxygen species homeostasis. May be a prominent source of superoxide generation via the one-electron reduction of molecular oxygen. May also catalyze nitric oxide (NO) production via the reduction of nitrite to NO with NADH or aldehyde as electron donor. May play a role in adipogenesis. The chain is Aldehyde oxidase 1 from Bos taurus (Bovine).